The sequence spans 92 residues: MALPSAWSVMRVVIPFISVLGLLGVRLVGASQDSGSVIPAESRPCVDCHAFEFMQRALQDLKKMAYNLDTRTETLLLRAEKRGLCDCFPAMH.

A signal peptide spans 1-30 (MALPSAWSVMRVVIPFISVLGLLGVRLVGA).

The protein belongs to the NICOL family.

It localises to the secreted. Its subcellular location is the cytoplasm. It is found in the perinuclear region. Its function is as follows. mRNA-binding protein which interacts with a range of target mRNAs and may promote extracellular matrix production. May function as a component of lumicrine signaling and may play a crucial role in epididymal-mediated sperm maturation and male fertility. In Gallus gallus (Chicken), this protein is NELL2-interacting cell ontogeny regulator 1.